The primary structure comprises 607 residues: Probable Ufm1-specific protease 2 (607 aa).

Residues Cys440, Asp564, and His566 contribute to the active site.

The protein belongs to the peptidase C78 family.

Thiol protease which recognizes and hydrolyzes the peptide bond at the C-terminal Gly of UFM1, a ubiquitin-like modifier protein bound to a number of target proteins. Does not hydrolyze SUMO1 or ISG15 ubiquitin-like proteins. This chain is Probable Ufm1-specific protease 2, found in Drosophila melanogaster (Fruit fly).